The sequence spans 251 residues: MLKKRIIPCLDVKDGRVVKGVNFVNLTDVGDPVDAARAYYEAGCDELVFLDITATSDNRETTVDMVRHVADQVFIPFTVGGGIRSVDDMNKMLKAGADKVAVNSSAIANPQLIKDCAEKFGSQCVVVAIDARKEADDSWHVYVAGGRKDTGIDLLAWVKEAVQLGAGEILLTSMDKDGTKSGFDLDMLNAVAQLADIPIIASGGAGNMEHMVEIFEKTPATGALAASIFHYGEVSIADTKKAMKEHGIEVR.

Residues aspartate 11 and aspartate 130 contribute to the active site.

It belongs to the HisA/HisF family. As to quaternary structure, heterodimer of HisH and HisF.

The protein resides in the cytoplasm. It carries out the reaction 5-[(5-phospho-1-deoxy-D-ribulos-1-ylimino)methylamino]-1-(5-phospho-beta-D-ribosyl)imidazole-4-carboxamide + L-glutamine = D-erythro-1-(imidazol-4-yl)glycerol 3-phosphate + 5-amino-1-(5-phospho-beta-D-ribosyl)imidazole-4-carboxamide + L-glutamate + H(+). It functions in the pathway amino-acid biosynthesis; L-histidine biosynthesis; L-histidine from 5-phospho-alpha-D-ribose 1-diphosphate: step 5/9. In terms of biological role, IGPS catalyzes the conversion of PRFAR and glutamine to IGP, AICAR and glutamate. The HisF subunit catalyzes the cyclization activity that produces IGP and AICAR from PRFAR using the ammonia provided by the HisH subunit. This Streptococcus mutans serotype c (strain ATCC 700610 / UA159) protein is Imidazole glycerol phosphate synthase subunit HisF.